Here is a 165-residue protein sequence, read N- to C-terminus: Acireductone dioxygenase (165 aa).

Residues H90, H92, E96, and H134 each contribute to the Fe(2+) site. The Ni(2+) site is built by H90, H92, E96, and H134.

Belongs to the acireductone dioxygenase (ARD) family. In terms of assembly, monomer. Requires Fe(2+) as cofactor. Ni(2+) serves as cofactor.

The enzyme catalyses 1,2-dihydroxy-5-(methylsulfanyl)pent-1-en-3-one + O2 = 3-(methylsulfanyl)propanoate + CO + formate + 2 H(+). It catalyses the reaction 1,2-dihydroxy-5-(methylsulfanyl)pent-1-en-3-one + O2 = 4-methylsulfanyl-2-oxobutanoate + formate + 2 H(+). The protein operates within amino-acid biosynthesis; L-methionine biosynthesis via salvage pathway; L-methionine from S-methyl-5-thio-alpha-D-ribose 1-phosphate: step 5/6. Its function is as follows. Catalyzes 2 different reactions between oxygen and the acireductone 1,2-dihydroxy-3-keto-5-methylthiopentene (DHK-MTPene) depending upon the metal bound in the active site. Fe-containing acireductone dioxygenase (Fe-ARD) produces formate and 2-keto-4-methylthiobutyrate (KMTB), the alpha-ketoacid precursor of methionine in the methionine recycle pathway. Ni-containing acireductone dioxygenase (Ni-ARD) produces methylthiopropionate, carbon monoxide and formate, and does not lie on the methionine recycle pathway. This chain is Acireductone dioxygenase, found in Rhodopseudomonas palustris (strain ATCC BAA-98 / CGA009).